Reading from the N-terminus, the 587-residue chain is Prolycopene isomerase 1, chloroplastic (587 aa).

Positions 1–13 (MLCLSLNSSSTSP) are enriched in low complexity. The tract at residues 1-21 (MLCLSLNSSSTSPPKSPLHHS) is disordered. A chloroplast-targeting transit peptide spans 1 to 50 (MLCLSLNSSSTSPPKSPLHHSFSRRSMRSWVCSPRVQRKKLGFWSSPKAV).

This sequence belongs to the carotenoid/retinoid oxidoreductase family. CrtISO subfamily. NAD(+) serves as cofactor. The cofactor is NADP(+). FAD is required as a cofactor. As to expression, up-regulated in the flower buds and flower lip tissue, while it is weakly expressed in leaves.

It is found in the plastid. Its subcellular location is the chloroplast membrane. It catalyses the reaction 7,7',9,9'-tetra-cis-lycopene = all-trans-lycopene. The protein operates within carotenoid biosynthesis; lycopene biosynthesis. Its function is as follows. Carotene cis-trans-isomerase that converts 7,9,9'-tri-cis-neurosporene to 9'-cis-neurosporene and 7,9,9',7'-tetra-cis-lycopene (also known as prolycopene) into all-trans-lycopene. Isomerization requires redox-active components, suggesting that isomerization is achieved by a reversible redox reaction acting at specific double bonds. Isomerizes adjacent cis-double bonds at C7 and C9 pairwise into the trans-configuration, but is incapable of isomerizing single cis-double bonds at C9 and C9'. This chain is Prolycopene isomerase 1, chloroplastic (CRTISO1), found in Oncidium hybrid cultivar (Orchid).